Consider the following 189-residue polypeptide: Protein Rex (189 aa).

Residues 1–16 show a composition bias toward basic residues; it reads MPKTRRRPRRSQRKRP. The tract at residues 1–27 is disordered; the sequence is MPKTRRRPRRSQRKRPPTPWPTSQGLD. Positions 2 to 18 match the Nuclear localization signal, and RNA-binding (RxRE) motif; it reads PKTRRRPRRSQRKRPPT. A homomultimerization region spans residues 56–70; sequence RPAYIVTPYWPPVQS. Ser70 carries the post-translational modification Phosphoserine; by host. The segment at 73–189 is disordered; the sequence is SPGTPSMDAL…PPSPGPSCPT (117 aa). The span at 80–94 shows a compositional bias: low complexity; it reads DALSAQLYSSLSLDS. Positions 82 to 93 match the Nuclear export signal motif; the sequence is LSAQLYSSLSLD. Residues 123–131 form a homomultimerization region; that stretch reads PSSRPCANT. The segment covering 143-164 has biased composition (polar residues); it reads LGSTSQPCLFQTPDSGPKTCTP. Thr174 carries the phosphothreonine; by host modification. Ser177 is subject to Phosphoserine; by host. The span at 178-189 shows a compositional bias: pro residues; that stretch reads FPPPSPGPSCPT.

This sequence belongs to the deltaretrovirus Rex protein family. Homomultimer. Multimeric assembly is essential for activity and involves XPO1. Binds to human XPO1 and KPNB1. Interacts (via N-terminal nuclear localization signal) with human NPM1.

The protein localises to the host nucleus. It is found in the host nucleolus. Its subcellular location is the host cytoplasm. Functionally, rex escorts unspliced gag-pro-pol and singly spliced env mRNAs out of the nucleus of infected cells. These mRNAs carry a recognition sequence called Rex responsive element (RxRE or XRE) located at the 3' region of the long terminal repeat (LTR). This function is essential since most HTLV proteins are translated from unspliced or partially spliced pre-mRNAs that cannot exit the nucleus by the pathway used by fully processed cellular mRNAs. Rex itself is translated from a fully spliced mRNA that probably readily exits the nucleus. Rex's nuclear localization signal (NLS) binds directly to KPNB1/importin beta-1 without previous binding to KPNA1/importin alpha-1. KPNB1 binds to the GDP bound form of RAN (Ran-GDP) and targets Rex to the nucleus. In the nucleus, the conversion from Ran-GDP to Ran-GTP dissociates Rex from KPNB1 and allows Rex's binding to the RRE in viral pre-mRNAs. Rex multimerizes on the RRE via cooperative assembly. This multimerization is critical for its full biological activity, since it may shield the viral RNA from being spliced or down-regulated, and probably exposes Rex's nuclear export signal (NES) to the surface. Rex can then form a complex with XPO1/CRM1, RANBP3 and Ran-GTP, leading to nuclear export of the complex. Conversion from Ran-GTP to Ran-GDP mediates dissociation of the Rex/RRE/XPO1/RANBP3/RAN complex, so that Rex can return to the nucleus for a subsequent round of export. The sequence is that of Protein Rex from Human T-cell leukemia virus 1 (strain Japan ATK-1 subtype A) (HTLV-1).